The chain runs to 299 residues: Ribosomal RNA small subunit methyltransferase H (299 aa).

S-adenosyl-L-methionine is bound by residues 36–38 (GGH), D55, F82, D97, and Q104.

Belongs to the methyltransferase superfamily. RsmH family.

It localises to the cytoplasm. The catalysed reaction is cytidine(1402) in 16S rRNA + S-adenosyl-L-methionine = N(4)-methylcytidine(1402) in 16S rRNA + S-adenosyl-L-homocysteine + H(+). In terms of biological role, specifically methylates the N4 position of cytidine in position 1402 (C1402) of 16S rRNA. The sequence is that of Ribosomal RNA small subunit methyltransferase H from Synechococcus sp. (strain RCC307).